The sequence spans 313 residues: MSQEFAHLSVLLEETVGGLNIKDDGIYIDGTFGRGGHSRQVLQRLGENGRLIAIDRDPQAIEAAKQFADDPRFQIVHGGFGQLADYVEELGLVGKIDGVLLDLGVSSPQLDDAERGFSFLRDGPLDMRMDNSQGETAAQWLARAEIEDMAWVFKTYGEEKNARHIARCIAADRDKTPFLRTKDLADLIARITKNKERNKHPATRVFQAIRIYINSELDQIDQALEGALTVLAPQGRLSIISFHSLEDRIVKRFIRRHSQGESVPHGLPITEDQINKSRKLRAIGKAIMPSDEEIERNARARSSVLRIAERLDY.

Residues 35-37 (GGH), Asp-55, Phe-80, Asp-102, and Gln-109 each bind S-adenosyl-L-methionine.

It belongs to the methyltransferase superfamily. RsmH family.

It is found in the cytoplasm. The enzyme catalyses cytidine(1402) in 16S rRNA + S-adenosyl-L-methionine = N(4)-methylcytidine(1402) in 16S rRNA + S-adenosyl-L-homocysteine + H(+). Functionally, specifically methylates the N4 position of cytidine in position 1402 (C1402) of 16S rRNA. The polypeptide is Ribosomal RNA small subunit methyltransferase H (Shewanella sp. (strain MR-4)).